The primary structure comprises 108 residues: Peptidyl-prolyl cis-trans isomerase FKBP1B (108 aa).

A PPIase FKBP-type domain is found at 20–108 (GQICVVHYTG…IFDVELLNLE (89 aa)).

This sequence belongs to the FKBP-type PPIase family. FKBP1 subfamily. In terms of assembly, identified in a complex composed of RYR2, FKBP1B, PKA catalytic subunit, PRKAR2A, AKAP6, and the protein phosphatases PP2A and PP1. Interacts directly with RYR2. As to expression, detected in heart muscle (at protein level). Ubiquitous.

Its subcellular location is the cytoplasm. The protein localises to the sarcoplasmic reticulum. It carries out the reaction [protein]-peptidylproline (omega=180) = [protein]-peptidylproline (omega=0). Its activity is regulated as follows. Inhibited by both FK506 and rapamycin. In terms of biological role, has the potential to contribute to the immunosuppressive and toxic effects of FK506 and rapamycin. PPIases accelerate the folding of proteins. It catalyzes the cis-trans isomerization of proline imidic peptide bonds in oligopeptides. This is Peptidyl-prolyl cis-trans isomerase FKBP1B (Fkbp1b) from Rattus norvegicus (Rat).